The primary structure comprises 308 residues: Taste receptor type 2 member 43 (308 aa).

A topological domain (extracellular) is located at residue methionine 1. A helical membrane pass occupies residues 2-22 (ITFLPIIFSILVVFTFVIGNF). Topologically, residues 23–46 (ANGFIALVNSIEWVKRQKISFADQ) are cytoplasmic. The helical transmembrane segment at 47 to 67 (ILTALAVSRVGLLWILLLNWY) threads the bilayer. At 68 to 86 (STVLNPAFYSVEVRTIAYN) the chain is on the extracellular side. A helical membrane pass occupies residues 87–107 (LWAVINHFSNWLATSLSIFYL). Residues 108 to 126 (LKIANFSNLIFLHLRRRVK) are Cytoplasmic-facing. A helical membrane pass occupies residues 127–147 (SVVLVILWGPLLFLVCHLFVV). At 148 to 178 (NMNEIIQTKEYEGNMTWKSKLRSAMYLSNTT) the chain is on the extracellular side. Residues asparagine 161 and asparagine 176 are each glycosylated (N-linked (GlcNAc...) asparagine). The chain crosses the membrane as a helical span at residues 179–199 (VTILANLVPFILTLISFLLLI). Over 200–229 (CSLCKHLKKMQLRDKGSQDPSTKVHIKALQ) the chain is Cytoplasmic. The helical transmembrane segment at 230 to 249 (TVISLSLCAIYFLSIMISSW) threads the bilayer. The Extracellular portion of the chain corresponds to 250–258 (SLGRVENKA). Residues 259 to 279 (IFMFCKAIRFSYPSAHAFILI) form a helical membrane-spanning segment. Topologically, residues 280 to 308 (WGNKKLKQTLLSVLWNVRYCVKGQKLQSP) are cytoplasmic.

It belongs to the G-protein coupled receptor T2R family.

It localises to the membrane. It is found in the cell projection. The protein resides in the cilium membrane. Gustducin-coupled receptor immplicated in the perception of bitter compounds in the oral cavity and the gastrointestinal tract. Signals through PLCB2 and the calcium-regulated cation channel TRPM5. Activated by the sulfonyl amide sweeteners saccharin and acesulfame K. In airway epithelial cells, binding of bitter compounds increases the intracellular calcium ion concentration and stimulates ciliary beat frequency. May act as chemosensory receptors in airway epithelial cells to detect and eliminate potential noxious agents from the airways. The protein is Taste receptor type 2 member 43 (TAS2R43) of Macaca mulatta (Rhesus macaque).